A 414-amino-acid polypeptide reads, in one-letter code: Glutamyl-tRNA reductase (414 aa).

Substrate-binding positions include 49-52, Ser108, 113-115, and Gln119; these read TCNR and EPQ. The active-site Nucleophile is Cys50. Position 188–193 (188–193) interacts with NADP(+); it reads GAGQTG.

This sequence belongs to the glutamyl-tRNA reductase family. As to quaternary structure, homodimer.

The enzyme catalyses (S)-4-amino-5-oxopentanoate + tRNA(Glu) + NADP(+) = L-glutamyl-tRNA(Glu) + NADPH + H(+). It functions in the pathway porphyrin-containing compound metabolism; protoporphyrin-IX biosynthesis; 5-aminolevulinate from L-glutamyl-tRNA(Glu): step 1/2. Its function is as follows. Catalyzes the NADPH-dependent reduction of glutamyl-tRNA(Glu) to glutamate 1-semialdehyde (GSA). This is Glutamyl-tRNA reductase from Francisella philomiragia subsp. philomiragia (strain ATCC 25017 / CCUG 19701 / FSC 153 / O#319-036).